The sequence spans 488 residues: Proline--tRNA ligase (488 aa).

It belongs to the class-II aminoacyl-tRNA synthetase family. ProS type 3 subfamily. In terms of assembly, homodimer.

The protein localises to the cytoplasm. It catalyses the reaction tRNA(Pro) + L-proline + ATP = L-prolyl-tRNA(Pro) + AMP + diphosphate. In terms of biological role, catalyzes the attachment of proline to tRNA(Pro) in a two-step reaction: proline is first activated by ATP to form Pro-AMP and then transferred to the acceptor end of tRNA(Pro). The protein is Proline--tRNA ligase of Borreliella burgdorferi (strain ZS7) (Borrelia burgdorferi).